An 88-amino-acid chain; its full sequence is Small ribosomal subunit protein bS20 (88 aa).

It belongs to the bacterial ribosomal protein bS20 family.

Functionally, binds directly to 16S ribosomal RNA. This Natranaerobius thermophilus (strain ATCC BAA-1301 / DSM 18059 / JW/NM-WN-LF) protein is Small ribosomal subunit protein bS20.